Here is a 1343-residue protein sequence, read N- to C-terminus: DNA-directed RNA polymerase subunit beta (1343 aa).

It belongs to the RNA polymerase beta chain family. The RNAP catalytic core consists of 2 alpha, 1 beta, 1 beta' and 1 omega subunit. When a sigma factor is associated with the core the holoenzyme is formed, which can initiate transcription.

It catalyses the reaction RNA(n) + a ribonucleoside 5'-triphosphate = RNA(n+1) + diphosphate. In terms of biological role, DNA-dependent RNA polymerase catalyzes the transcription of DNA into RNA using the four ribonucleoside triphosphates as substrates. The sequence is that of DNA-directed RNA polymerase subunit beta from Shewanella piezotolerans (strain WP3 / JCM 13877).